The following is a 702-amino-acid chain: DnaJ homolog subfamily C member 14 (702 aa).

Disordered regions lie at residues 1 to 148 and 165 to 229; these read MAQK…GGNG and DELE…KRSQ. Pro residues predominate over residues 75 to 84; the sequence is HGPPGGPGPP. Residues 88 to 103 are compositionally biased toward acidic residues; the sequence is EDPDQSETSSEEESGV. Polar residues predominate over residues 113-133; sequence TGNQKDGNSFLSIPSACNCQG. The span at 165 to 175 shows a compositional bias: acidic residues; the sequence is DELEEEYDDEE. Residues 192–201 are compositionally biased toward basic residues; the sequence is PPSRRQRHRF. Over residues 202-217 the composition is skewed to basic and acidic residues; sequence PTKEDTREGGRRDPRS. The segment covering 218 to 227 has biased composition (basic residues); it reads PGRHRLGRKR. 3 helical membrane passes run 250 to 270, 300 to 320, and 326 to 346; these read AGFWWLIELLVLVGEYVETCG, GWAQVMFQFLSQGFYCGVGLF, and LLGALLLLALALFLGFLQLGW. The 65-residue stretch at 443–507 folds into the J domain; it reads NPFHVLGVEA…EKRKEYEMKR (65 aa). The interval 658-702 is disordered; the sequence is MPNGNFFAAPQPAPGAAAASKPNSTVPKGEAKPKRRKKVRRPFQR. A compositionally biased stretch (low complexity) spans 659-676; sequence PNGNFFAAPQPAPGAAAA. Positions 690–702 are enriched in basic residues; sequence PKRRKKVRRPFQR.

As to quaternary structure, interacts with the FxxxFxxxF motif of DRD1 via its C-terminal domain. In terms of tissue distribution, highly expressed in pancreas and selectively expressed in brain, lung, liver, skeletal muscle and kidney.

It localises to the endoplasmic reticulum membrane. In terms of biological role, regulates the export of target proteins, such as DRD1, from the endoplasmic reticulum to the cell surface. The chain is DnaJ homolog subfamily C member 14 (DNAJC14) from Homo sapiens (Human).